The chain runs to 117 residues: Acidic phospholipase A2 (117 aa).

7 disulfides stabilise this stretch: Cys11–Cys70, Cys25–Cys116, Cys27–Cys43, Cys42–Cys98, Cys49–Cys91, Cys59–Cys84, and Cys77–Cys89. Positions 26, 28, and 30 each coordinate Ca(2+). Residue His46 is part of the active site. Asp47 contributes to the Ca(2+) binding site. Asn80 carries an N-linked (GlcNAc...) asparagine glycan. Residue Asp92 is part of the active site.

Ca(2+) serves as cofactor. Expressed by the venom gland.

The protein localises to the secreted. The catalysed reaction is a 1,2-diacyl-sn-glycero-3-phosphocholine + H2O = a 1-acyl-sn-glycero-3-phosphocholine + a fatty acid + H(+). Its function is as follows. Snake venom phospholipase A2 (PLA2) that shows strong myotoxicity and induces edema in mice. Shows no cytotoxicity in vitro. Has a strong anticoagulant effect in vitro. PLA2 catalyzes the calcium-dependent hydrolysis of the 2-acyl groups in 3-sn-phosphoglycerides. The chain is Acidic phospholipase A2 from Micrurus dumerilii (Coral snake).